The chain runs to 185 residues: Meiotic recombination protein REC104 (185 aa).

The interval 146 to 168 is disordered; the sequence is ANETRPLSSSSTPQILQSDYSVV.

Its function is as follows. Potential transcriptional regulator that is required to activate expression of a number of early meiotic genes including HOP1. The polypeptide is Meiotic recombination protein REC104 (REC104) (Saccharomyces pastorianus (Lager yeast)).